Consider the following 739-residue polypeptide: Phosphoribosylformylglycinamidine synthase subunit PurL (739 aa).

His-54 is a catalytic residue. Residues Tyr-57 and Lys-96 each coordinate ATP. Glu-98 provides a ligand contact to Mg(2+). Substrate-binding positions include 99 to 102 and Arg-121; that span reads SHNH. His-100 serves as the catalytic Proton acceptor. Asp-122 contributes to the Mg(2+) binding site. Gln-245 provides a ligand contact to substrate. Residue Asp-273 coordinates Mg(2+). 317-319 contributes to the substrate binding site; sequence ESQ. ATP-binding residues include Asp-500 and Gly-537. Asn-538 contacts Mg(2+). Ser-540 is a binding site for substrate.

It belongs to the FGAMS family. Monomer. Part of the FGAM synthase complex composed of 1 PurL, 1 PurQ and 2 PurS subunits.

It is found in the cytoplasm. The catalysed reaction is N(2)-formyl-N(1)-(5-phospho-beta-D-ribosyl)glycinamide + L-glutamine + ATP + H2O = 2-formamido-N(1)-(5-O-phospho-beta-D-ribosyl)acetamidine + L-glutamate + ADP + phosphate + H(+). It functions in the pathway purine metabolism; IMP biosynthesis via de novo pathway; 5-amino-1-(5-phospho-D-ribosyl)imidazole from N(2)-formyl-N(1)-(5-phospho-D-ribosyl)glycinamide: step 1/2. Part of the phosphoribosylformylglycinamidine synthase complex involved in the purines biosynthetic pathway. Catalyzes the ATP-dependent conversion of formylglycinamide ribonucleotide (FGAR) and glutamine to yield formylglycinamidine ribonucleotide (FGAM) and glutamate. The FGAM synthase complex is composed of three subunits. PurQ produces an ammonia molecule by converting glutamine to glutamate. PurL transfers the ammonia molecule to FGAR to form FGAM in an ATP-dependent manner. PurS interacts with PurQ and PurL and is thought to assist in the transfer of the ammonia molecule from PurQ to PurL. This Bacillus mycoides (strain KBAB4) (Bacillus weihenstephanensis) protein is Phosphoribosylformylglycinamidine synthase subunit PurL.